Here is a 78-residue protein sequence, read N- to C-terminus: Acyl carrier protein (78 aa).

A Carrier domain is found at Ser2 to Ala77. Position 37 is an O-(pantetheine 4'-phosphoryl)serine (Ser37).

It belongs to the acyl carrier protein (ACP) family. 4'-phosphopantetheine is transferred from CoA to a specific serine of apo-ACP by AcpS. This modification is essential for activity because fatty acids are bound in thioester linkage to the sulfhydryl of the prosthetic group.

The protein localises to the cytoplasm. Its pathway is lipid metabolism; fatty acid biosynthesis. In terms of biological role, carrier of the growing fatty acid chain in fatty acid biosynthesis. The polypeptide is Acyl carrier protein (Vibrio vulnificus (strain CMCP6)).